The sequence spans 438 residues: Adenylosuccinate synthetase (438 aa).

GTP-binding positions include 13–19 (GDEGKGK) and 41–43 (GHT). D14 acts as the Proton acceptor in catalysis. Residues D14 and G41 each contribute to the Mg(2+) site. Residues 14 to 17 (DEGK), 39 to 42 (NAGH), T136, R150, Q231, T246, and R310 each bind IMP. Residue H42 is the Proton donor of the active site. 306 to 312 (STTGRRR) contacts substrate. Residues R312, 338–340 (KID), and 421–423 (STG) each bind GTP.

Belongs to the adenylosuccinate synthetase family. In terms of assembly, homodimer. The cofactor is Mg(2+).

It is found in the cytoplasm. It carries out the reaction IMP + L-aspartate + GTP = N(6)-(1,2-dicarboxyethyl)-AMP + GDP + phosphate + 2 H(+). It functions in the pathway purine metabolism; AMP biosynthesis via de novo pathway; AMP from IMP: step 1/2. In terms of biological role, plays an important role in the de novo pathway of purine nucleotide biosynthesis. Catalyzes the first committed step in the biosynthesis of AMP from IMP. This is Adenylosuccinate synthetase from Blochmanniella floridana.